The primary structure comprises 291 residues: MSKIPPVNVKDLLDAGVHFGHKTSRWNPKMAPYIYGERDEVHIIDLRQTAALMNVALNAIYETVKNDGKVLFVSTKIQASDIIAEYAEKCGQYYVNHRWLGGMLTNWKTISGSIEKLNKLEQTLENEEACIGYTKKEILDMNRKKDKLLLSLAGIRELHSKPDLIVIIDTNKEHIAISEAVRLDIPIVAVVDTNSNPDHIDYPIPGNDDAIRSIRFYCSLFADAALQGLEESMKASGVDLGSIQEHGDKNLAPKNVSKLKQAKKFSKTKNINEEANTEFEQALSDADEDKN.

Residues 270-291 (NINEEANTEFEQALSDADEDKN) are disordered.

The protein belongs to the universal ribosomal protein uS2 family.

This Rickettsia bellii (strain OSU 85-389) protein is Small ribosomal subunit protein uS2.